The chain runs to 341 residues: S-adenosylmethionine:tRNA ribosyltransferase-isomerase (341 aa).

The protein belongs to the QueA family. As to quaternary structure, monomer.

It is found in the cytoplasm. It carries out the reaction 7-aminomethyl-7-carbaguanosine(34) in tRNA + S-adenosyl-L-methionine = epoxyqueuosine(34) in tRNA + adenine + L-methionine + 2 H(+). The protein operates within tRNA modification; tRNA-queuosine biosynthesis. Transfers and isomerizes the ribose moiety from AdoMet to the 7-aminomethyl group of 7-deazaguanine (preQ1-tRNA) to give epoxyqueuosine (oQ-tRNA). This Pelotomaculum thermopropionicum (strain DSM 13744 / JCM 10971 / SI) protein is S-adenosylmethionine:tRNA ribosyltransferase-isomerase.